Reading from the N-terminus, the 168-residue chain is Phospholipase A and acyltransferase 1 (168 aa).

Over 1–138 (MAFNDCFSLN…GEGVSEQANR (138 aa)) the chain is Cytoplasmic. The region spanning 20-135 (LIEVFRPGYQ…LRYGEGVSEQ (116 aa)) is the LRAT domain. His-30 is a catalytic residue. Catalysis depends on Cys-119, which acts as the Acyl-thioester intermediate. Residues 139–159 (AISTVEFVTAAVGVFSFLGLF) form a helical membrane-spanning segment. The Lumenal segment spans residues 160–168 (PKGQRAKYY).

Belongs to the H-rev107 family. As to expression, abundantly expressed in testis, skeletal muscle, brain, and heart. Highly expressed in the testis, skeletal muscle, brain, heart, and thyroid.

It is found in the membrane. The protein localises to the cytoplasm. The protein resides in the nucleus. The catalysed reaction is a 1,2-diacyl-sn-glycero-3-phosphocholine + H2O = a 1-acyl-sn-glycero-3-phosphocholine + a fatty acid + H(+). It catalyses the reaction a 1,2-diacyl-sn-glycero-3-phosphocholine + H2O = a 2-acyl-sn-glycero-3-phosphocholine + a fatty acid + H(+). The enzyme catalyses 1,2-dihexadecanoyl-sn-glycero-3-phosphocholine + H2O = 2-hexadecanoyl-sn-glycero-3-phosphocholine + hexadecanoate + H(+). It carries out the reaction 1,2-dihexadecanoyl-sn-glycero-3-phosphocholine + H2O = 1-hexadecanoyl-sn-glycero-3-phosphocholine + hexadecanoate + H(+). The catalysed reaction is 1-hexadecanoyl-2-(5Z,8Z,11Z,14Z-eicosatetraenoyl)-sn-glycero-3-phosphoethanolamine + H2O = 2-(5Z,8Z,11Z,14Z)-eicosatetraenoyl-sn-glycero-3-phosphoethanolamine + hexadecanoate + H(+). It catalyses the reaction 1-hexadecanoyl-2-(5Z,8Z,11Z,14Z-eicosatetraenoyl)-sn-glycero-3-phosphoethanolamine + H2O = 1-hexadecanoyl-sn-glycero-3-phosphoethanolamine + (5Z,8Z,11Z,14Z)-eicosatetraenoate + H(+). The enzyme catalyses 1,2-di-(9Z-octadecenoyl)-sn-glycero-3-phosphoethanolamine + 1,2-dihexadecanoyl-sn-glycero-3-phosphocholine = hexadecanoyl-sn-glycero-3-phosphocholine + N-hexadecanoyl-1,2-di-(9Z-octadecenoyl)-sn-glycero-3-phosphoethanolamine + H(+). It carries out the reaction 1,2-dihexadecanoyl-sn-glycero-3-phosphocholine + a 2-acyl-sn-glycero-3-phosphocholine = a 1-hexadecanoyl-2-acyl-sn-glycero-3-phosphocholine + 2-hexadecanoyl-sn-glycero-3-phosphocholine. In terms of biological role, exhibits both phospholipase A1/2 and acyltransferase activities. Shows phospholipase A1 (PLA1) and A2 (PLA2) activity, catalyzing the calcium-independent release of fatty acids from the sn-1 or sn-2 position of glycerophospholipids. Shows O-acyltransferase activity, catalyzing the transfer of a fatty acyl group from glycerophospholipid to the hydroxyl group of lysophospholipid. Shows N-acyltransferase activity, catalyzing the calcium-independent transfer of a fatty acyl group at the sn-1 position of phosphatidylcholine (PC) and other glycerophospholipids to the primary amine of phosphatidylethanolamine (PE), forming N-acylphosphatidylethanolamine (NAPE) which serves as precursor for N-acylethanolamines (NAEs). The polypeptide is Phospholipase A and acyltransferase 1 (Homo sapiens (Human)).